The chain runs to 437 residues: Chromosomal replication initiator protein DnaA (437 aa).

Residues 1–69 form a domain I, interacts with DnaA modulators region; the sequence is MLGDTTLKQL…AHLFELSTGI (69 aa). The tract at residues 69-100 is domain II; the sequence is IRPKIEIRLGSLKKDVKSSSPKAGVSKGQKST. The tract at residues 101–315 is domain III, AAA+ region; it reads ILNPSFTFDS…GIIIKLNAYA (215 aa). The ATP site is built by G145, G147, K148, and T149. The interval 316–437 is domain IV, binds dsDNA; the sequence is NLMNQEITLQ…ELKNKIKSRN (122 aa).

It belongs to the DnaA family. Oligomerizes as a right-handed, spiral filament on DNA at oriC.

Its subcellular location is the cytoplasm. Its function is as follows. Plays an essential role in the initiation and regulation of chromosomal replication. ATP-DnaA binds to the origin of replication (oriC) to initiate formation of the DNA replication initiation complex once per cell cycle. Binds the DnaA box (a 9 base pair repeat at the origin) and separates the double-stranded (ds)DNA. Forms a right-handed helical filament on oriC DNA; dsDNA binds to the exterior of the filament while single-stranded (ss)DNA is stabiized in the filament's interior. The ATP-DnaA-oriC complex binds and stabilizes one strand of the AT-rich DNA unwinding element (DUE), permitting loading of DNA polymerase. After initiation quickly degrades to an ADP-DnaA complex that is not apt for DNA replication. Binds acidic phospholipids. This is Chromosomal replication initiator protein DnaA from Wolinella succinogenes (strain ATCC 29543 / DSM 1740 / CCUG 13145 / JCM 31913 / LMG 7466 / NCTC 11488 / FDC 602W) (Vibrio succinogenes).